A 60-amino-acid chain; its full sequence is Potassium channel toxin Tst-beta-KTx (60 aa).

In terms of domain architecture, BetaSPN-type CS-alpha/beta spans 26–60 (QFGCPAYEGYCNDHCNDIERKDGECHGFKCKCAKD). Cystine bridges form between C29/C50, C36/C55, and C40/C57.

Belongs to the long chain scorpion toxin family. Class 1 subfamily. Expressed by the venom gland.

It localises to the secreted. In terms of biological role, inhibits voltage-gated potassium channels Kv1.1/KCNA1, Kv1.2/KCNA2, and Kv1.3/KCNA3. Functionally, does not induce hemolytic activity, lactate dehydrogenase (LDH) release from mast cells, mast cell degranulation, and antimicrobial effects. In vivo, injection into mice causes moderate edema formation, but induces very weak or no change in nociceptive sensibility. It also reduces mice locomotion, suggesting an increase in anxiety, but causes no alteration in rearing (standing on hind limbs). The polypeptide is Potassium channel toxin Tst-beta-KTx (Tityus stigmurus (Brazilian scorpion)).